The sequence spans 176 residues: Large ribosomal subunit protein uL6 (176 aa).

This sequence belongs to the universal ribosomal protein uL6 family. Part of the 50S ribosomal subunit.

In terms of biological role, this protein binds to the 23S rRNA, and is important in its secondary structure. It is located near the subunit interface in the base of the L7/L12 stalk, and near the tRNA binding site of the peptidyltransferase center. The polypeptide is Large ribosomal subunit protein uL6 (Shewanella sediminis (strain HAW-EB3)).